The primary structure comprises 400 residues: Phosphoglycerate kinase (400 aa).

Substrate is bound by residues 22-24 (DFN), Arg38, 61-64 (HLGR), Arg119, and Arg152. ATP contacts are provided by residues Lys205, Gly296, Glu327, and 353–356 (GGDT).

This sequence belongs to the phosphoglycerate kinase family. As to quaternary structure, monomer.

Its subcellular location is the cytoplasm. The catalysed reaction is (2R)-3-phosphoglycerate + ATP = (2R)-3-phospho-glyceroyl phosphate + ADP. The protein operates within carbohydrate degradation; glycolysis; pyruvate from D-glyceraldehyde 3-phosphate: step 2/5. The sequence is that of Phosphoglycerate kinase from Campylobacter lari (strain RM2100 / D67 / ATCC BAA-1060).